The sequence spans 205 residues: Dr1-associated corepressor (205 aa).

A Histone-fold domain is found at 14 to 77 (PARIKKIMQT…SHLKQCIELE (64 aa)). Residues 91–205 (PDMQGDGEDN…EAEDEEDYDS (115 aa)) form a disordered region. Basic and acidic residues predominate over residues 98-108 (EDNHTDGDKGP). Residues 138 to 155 (SEQEDESEDTDTDGEEET) show a composition bias toward acidic residues. A compositionally biased stretch (pro residues) spans 172-193 (PPTPFMPFTSPLPLPPAPPGPS). The span at 196-205 (EAEDEEDYDS) shows a compositional bias: acidic residues.

The protein belongs to the NC2 alpha/DRAP1 family. Heterodimer with DR1. Binds BTAF1. In terms of processing, phosphorylation reduces DNA binding, but has no effect on heterodimerization and TBP binding.

It localises to the nucleus. The association of the DR1/DRAP1 heterodimer with TBP results in a functional repression of both activated and basal transcription of class II genes. This interaction precludes the formation of a transcription-competent complex by inhibiting the association of TFIIA and/or TFIIB with TBP. Can bind to DNA on its own. In Rattus norvegicus (Rat), this protein is Dr1-associated corepressor.